The sequence spans 567 residues: Restriction of telomere capping protein 5 (567 aa).

The 227-residue stretch at 289–515 folds into the TLDc domain; the sequence is KVMTPALLAQ…IQDVEVWGCG (227 aa).

Belongs to the RTC5 family.

The protein resides in the cytoplasm. In terms of biological role, may be involved in a process influencing telomere capping. This Saccharomyces cerevisiae (strain RM11-1a) (Baker's yeast) protein is Restriction of telomere capping protein 5 (RTC5).